The sequence spans 897 residues: 3'-5' exonuclease DinG (897 aa).

The Exonuclease domain occupies 8–161 (VVDLETTGNQ…DEDAATTAKL (154 aa)). The 256-residue stretch at 241–496 (SKAVDQLGLT…KAIDQLEKQR (256 aa)) folds into the Helicase ATP-binding domain. 276–283 (ASLGSGKS) is an ATP binding site. The DEAH box signature appears at 448–451 (DEAH). Positions 703-883 (NIDEYVASIV…NYRQKKGDIQ (181 aa)) constitute a Helicase C-terminal domain.

This sequence belongs to the helicase family. DinG subfamily. Type 2 sub-subfamily.

In terms of biological role, 3'-5' exonuclease. This Staphylococcus aureus (strain bovine RF122 / ET3-1) protein is 3'-5' exonuclease DinG.